The primary structure comprises 1230 residues: Serine/threonine-protein kinase CST20 (1230 aa).

Residues M1–S20 show a composition bias toward polar residues. 2 disordered regions span residues M1 to N384 and S413 to E470. 2 stretches are compositionally biased toward low complexity: residues N57–S70 and S96–S125. The segment covering H150–Y161 has biased composition (basic and acidic residues). Composition is skewed to polar residues over residues D175–S197, T207–A224, and P237–D246. The segment covering S248–V257 has biased composition (low complexity). Polar residues-rich tracts occupy residues S262–S277 and D311–G330. Composition is skewed to low complexity over residues N349–T381 and K439–S468. The CRIB domain maps to I475–G488. Disordered stretches follow at residues F545 to D831 and L867 to A919. The segment covering N550–N561 has biased composition (polar residues). Over residues S570–A581 the composition is skewed to gly residues. Residues I604–K613 show a composition bias toward polar residues. Positions T614–N628 are enriched in basic and acidic residues. Residues A629–Q642 show a composition bias toward polar residues. 3 stretches are compositionally biased toward low complexity: residues P670–D683, S696–L710, and S736–S749. Positions Q750–A761 are enriched in polar residues. A compositionally biased stretch (pro residues) spans A789–P807. A compositionally biased stretch (polar residues) spans L811–S826. Positions L867 to R876 are enriched in basic and acidic residues. Residues Q877 to S892 show a composition bias toward polar residues. A Protein kinase domain is found at Y953–I1205. ATP-binding positions include I959–V967 and K983. D1073 acts as the Proton acceptor in catalysis.

This sequence belongs to the protein kinase superfamily. STE Ser/Thr protein kinase family. STE20 subfamily.

It localises to the cytoplasm. It is found in the nucleus. It catalyses the reaction L-seryl-[protein] + ATP = O-phospho-L-seryl-[protein] + ADP + H(+). The catalysed reaction is L-threonyl-[protein] + ATP = O-phospho-L-threonyl-[protein] + ADP + H(+). Its function is as follows. MAP4K component of the MAPK pathway required for the mating pheromone response, and the regulation of cell polarity and cell cycle. Phosphorylates histone H2B to form H2BS10ph. Required for hyphal formation and virulence. The protein is Serine/threonine-protein kinase CST20 (CST20) of Candida albicans (Yeast).